Here is a 324-residue protein sequence, read N- to C-terminus: UDP-N-acetylenolpyruvoylglucosamine reductase (324 aa).

Residues 36–217 (FRAGGLAELM…IRAEMDAVRA (182 aa)) form the FAD-binding PCMH-type domain. Residue Arg183 is part of the active site. The Proton donor role is filled by Ser232. Glu302 is an active-site residue.

This sequence belongs to the MurB family. Requires FAD as cofactor.

It is found in the cytoplasm. The catalysed reaction is UDP-N-acetyl-alpha-D-muramate + NADP(+) = UDP-N-acetyl-3-O-(1-carboxyvinyl)-alpha-D-glucosamine + NADPH + H(+). Its pathway is cell wall biogenesis; peptidoglycan biosynthesis. In terms of biological role, cell wall formation. This is UDP-N-acetylenolpyruvoylglucosamine reductase from Rhizobium rhizogenes (strain K84 / ATCC BAA-868) (Agrobacterium radiobacter).